A 656-amino-acid polypeptide reads, in one-letter code: Membrane-associated tyrosine- and threonine-specific cdc2-inhibitory kinase wee-1.3 (656 aa).

Positions 1–11 (MDETENNTSID) are enriched in polar residues. Positions 1-24 (MDETENNTSIDSVEVGPSSPRVVA) are disordered. Residues 107-354 (FQIDEIIGRG…SDALRKHLSI (248 aa)) form the Protein kinase domain. ATP contacts are provided by residues 113-121 (IGRGSFGEV) and Lys136. The Proton acceptor role is filled by Asp227. Positions 232 and 245 each coordinate Mg(2+). Disordered stretches follow at residues 449 to 552 (PFDF…NSSI) and 617 to 656 (KGKE…GDEN). Residues 486-505 (ATCSSSNSSAIETAEDSLSS) show a composition bias toward polar residues. Residues 617-631 (KGKEKPVVEPAELRQ) show a composition bias toward basic and acidic residues. Over residues 646 to 656 (ASFQGSSGDEN) the composition is skewed to polar residues.

Belongs to the protein kinase superfamily. Ser/Thr protein kinase family. WEE1 subfamily.

The protein resides in the golgi apparatus membrane. Its subcellular location is the cytoplasm. It carries out the reaction L-seryl-[protein] + ATP = O-phospho-L-seryl-[protein] + ADP + H(+). The catalysed reaction is L-threonyl-[protein] + ATP = O-phospho-L-threonyl-[protein] + ADP + H(+). Its function is as follows. Acts as a negative regulator of entry into mitosis (G2 to M transition) by phosphorylation of the CDK1 kinase during oocyte maturation. Required for embryonic development, germline proliferation and initiation of meiosis during spermatogenesis. Required for chromosome structure during mitosis and negative regulation of nuclear envelope breakdown. The polypeptide is Membrane-associated tyrosine- and threonine-specific cdc2-inhibitory kinase wee-1.3 (Caenorhabditis briggsae).